The following is a 193-amino-acid chain: Threonylcarbamoyl-AMP synthase (193 aa).

Residues Ser14–Arg193 enclose the YrdC-like domain.

It belongs to the SUA5 family. TsaC subfamily.

The protein localises to the cytoplasm. The enzyme catalyses L-threonine + hydrogencarbonate + ATP = L-threonylcarbamoyladenylate + diphosphate + H2O. In terms of biological role, required for the formation of a threonylcarbamoyl group on adenosine at position 37 (t(6)A37) in tRNAs that read codons beginning with adenine. Catalyzes the conversion of L-threonine, HCO(3)(-)/CO(2) and ATP to give threonylcarbamoyl-AMP (TC-AMP) as the acyladenylate intermediate, with the release of diphosphate. The protein is Threonylcarbamoyl-AMP synthase of Chromobacterium violaceum (strain ATCC 12472 / DSM 30191 / JCM 1249 / CCUG 213 / NBRC 12614 / NCIMB 9131 / NCTC 9757 / MK).